Reading from the N-terminus, the 169-residue chain is Small ribosomal subunit protein uS5c (169 aa).

One can recognise an S5 DRBM domain in the interval 17-80 (WQERVIQVRR…TDGRKNLINI (64 aa)).

This sequence belongs to the universal ribosomal protein uS5 family. As to quaternary structure, part of the 30S ribosomal subunit. Contacts protein S4.

Its subcellular location is the plastid. It localises to the chloroplast. In terms of biological role, with S4 and S12 plays an important role in translational accuracy. The polypeptide is Small ribosomal subunit protein uS5c (rps5) (Guillardia theta (Cryptophyte)).